A 2561-amino-acid chain; its full sequence is Squalestatin hexaketide synthase (2561 aa).

The interval 1-77 is disordered; it reads MDVSKEEGQR…NGTTNITPEF (77 aa). The segment covering 20–74 has biased composition (low complexity); it reads NETTNGHTNGYTNGHTNGHTNGTTNATTNGTTNGTMNGTTNGTTNRTTNGTTNIT. A Ketosynthase family 3 (KS3) domain is found at 83–503; that stretch reads QVPVAICGIG…GSNTHIIIDS (421 aa). Residues cysteine 253, histidine 390, and histidine 427 each act as for beta-ketoacyl synthase activity in the active site. The segment at 603-925 is malonyl-CoA:ACP transacylase (MAT) domain; that stretch reads FIFTGQGAQW…LEAIGKLFCF (323 aa). The tract at residues 972–1101 is N-terminal hotdog fold; it reads HELLGERSLE…GLVTASVVIS (130 aa). Residues 972 to 1253 form a dehydratase (DH) domain region; the sequence is HELLGERSLE…RGFKCKRTDE (282 aa). The 286-residue stretch at 972-1257 folds into the PKS/mFAS DH domain; it reads HELLGERSLE…CKRTDESFIQ (286 aa). Catalysis depends on histidine 1004, which acts as the Proton acceptor; for dehydratase activity. A C-terminal hotdog fold region spans residues 1112–1257; sequence TFPRKVDTSR…CKRTDESFIQ (146 aa). Catalysis depends on aspartate 1174, which acts as the Proton donor; for dehydratase activity. Residues 1421 to 1599 form a methyltransferase (CMet) domain region; sequence SFFQAAGLNK…GFEGAGTVVL (179 aa). The enoyl reductase (ER) (ER) domain stretch occupies residues 1826 to 2146; the sequence is GMLNTLHWVG…RGVHMGRIVV (321 aa). Residues 2170-2343 form a ketoreductase (KR) domain region; the sequence is STYLLTGGMG…PASVIDIAAI (174 aa). One can recognise a Carrier domain in the interval 2472-2550; it reads VLFAQEIAKR…SLGRLATKRL (79 aa). Serine 2509 carries the post-translational modification O-(pantetheine 4'-phosphoryl)serine.

Its pathway is secondary metabolite biosynthesis. Highly reducing polyketide synthase (HR-PKS); part of the gene cluster that mediates the biosynthesis of squalestatin S1 (SQS1, also known as zaragozic acid A), a heavily oxidized fungal polyketide that offers potent cholesterol lowering activity by targeting squalene synthase (SS). SQS1 is composed of a 2,8-dioxobicyclic[3.2.1]octane-3,4,5-tricarboxyclic acid core that is connected to two lipophilic polyketide arms. These initial steps feature the priming of an unusual benzoic acid starter unit onto the highly reducing polyketide synthase pks2, followed by oxaloacetate extension and product release to generate a tricarboxylic acid containing product. The phenylalanine ammonia lyase (PAL) M7 and the acyl-CoA ligase M9 are involved in transforming phenylalanine into benzoyl-CoA. The citrate synthase-like protein R3 is involved in connecting the C-alpha-carbons of the hexaketide chain and oxaloacetate to afford the tricarboxylic acid unit. The potential hydrolytic enzymes, M8 and M10, are in close proximity to pks2 and may participate in product release. On the other side, the tetraketide arm is synthesized by a the squalestatin tetraketide synthase pks1 and enzymatically esterified to the core in the last biosynthetic step, by the acetyltransferase M4. The biosynthesis of the tetraketide must involve 3 rounds of chain extension. After the first and second rounds methyl-transfer occurs, and in all rounds of extension the ketoreductase and dehydratase are active. The enoyl reductase and C-MeT of pks1 are not active in the final round of extension. The acetyltransferase M4 appears to have a broad substrate selectivity for its acyl CoA substrate, allowing the in vitro synthesis of novel squalestatins. The biosynthesis of SQS1 requires several oxidative steps likely performed by oxidoreductases M1, R1 and R2. Finally, in support of the identification of the cluster as being responsible for SQS1 production, the cluster contains a gene encoding a putative squalene synthase (SS) R6, suggesting a likely mechanism for self-resistance. This chain is Squalestatin hexaketide synthase, found in Phoma sp. (strain ATCC 20986 / MF5453).